Here is a 140-residue protein sequence, read N- to C-terminus: uncharacterized protein (140 aa).

The segment covering 1–15 (MQRQTGHMEDKKRTG) has biased composition (basic and acidic residues). A disordered region spans residues 1–34 (MQRQTGHMEDKKRTGLESQGTENAFSDGRDGKDG).

This is an uncharacterized protein from Gallus gallus (Chicken).